The primary structure comprises 138 residues: Flagellar assembly factor FliW (138 aa).

The protein belongs to the FliW family. As to quaternary structure, interacts with translational regulator CsrA and flagellin(s).

It is found in the cytoplasm. Acts as an anti-CsrA protein, binds CsrA and prevents it from repressing translation of its target genes, one of which is flagellin. Binds to flagellin and participates in the assembly of the flagellum. This is Flagellar assembly factor FliW from Symbiobacterium thermophilum (strain DSM 24528 / JCM 14929 / IAM 14863 / T).